The sequence spans 615 residues: MFS-type transporter 1 (615 aa).

Positions 1–85 are disordered; sequence MTALAAVPDL…GNNVSPHGRH (85 aa). The segment covering 16 to 53 has biased composition (polar residues); it reads PSTTTVHSPNYSGSPADISSSPTTRAVSRNTARQTASA. Residue Asn-25 is glycosylated (N-linked (GlcNAc...) asparagine). The next 6 helical transmembrane spans lie at 94 to 114, 138 to 158, 162 to 182, 192 to 212, 222 to 242, and 251 to 271; these read CLVI…SGIL, VYSL…HIIG, VWIT…RSAT, VLGV…TNGF, FAFQ…LGGI, and FGFY…LVVL. Asn-302 is a glycosylation site (N-linked (GlcNAc...) asparagine). 8 helical membrane passes run 320-340, 351-371, 397-417, 432-452, 455-475, 488-508, 522-542, and 585-605; these read WTGT…FSVV, QNIA…LWVG, AAVF…ALYF, FLPM…LVET, VRWL…IMAL, FAML…NLII, AVFN…TAVV, and AAFW…FLGL.

This sequence belongs to the major facilitator superfamily. EmrB family.

Its subcellular location is the membrane. Its function is as follows. MFS-type transporter; part of the gene cluster that mediates the biosynthesis of pyriculol and pyriculariol, two heptaketides that induce lesion formation upon application on rice leaves but are dispensable for pathogenicity. With the ABC transporter ABC7, is most likely responsible for pyriculol and pyriculariol secretion and thereby may contribute to intrinsic resistance. The polypeptide is MFS-type transporter 1 (Pyricularia oryzae (strain 70-15 / ATCC MYA-4617 / FGSC 8958) (Rice blast fungus)).